The sequence spans 347 residues: Phosphate acyltransferase (347 aa).

The protein belongs to the PlsX family. In terms of assembly, homodimer. Probably interacts with PlsY.

It is found in the cytoplasm. It carries out the reaction a fatty acyl-[ACP] + phosphate = an acyl phosphate + holo-[ACP]. It participates in lipid metabolism; phospholipid metabolism. Functionally, catalyzes the reversible formation of acyl-phosphate (acyl-PO(4)) from acyl-[acyl-carrier-protein] (acyl-ACP). This enzyme utilizes acyl-ACP as fatty acyl donor, but not acyl-CoA. This is Phosphate acyltransferase from Sinorhizobium fredii (strain NBRC 101917 / NGR234).